Reading from the N-terminus, the 175-residue chain is NADH-ubiquinone oxidoreductase chain 6 (175 aa).

Helical transmembrane passes span 1–21 (MMLYIVFILSVIFVMGFVGFS), 25–45 (SPIYGGLGLIVSGGVGCGIVL), 47–67 (FGGSFLGLMVFLIYLGGMMVV), 88–108 (AVLGAFVTGLLMEFFMVYYVL), and 149–169 (YGTWLVIVTGWSLLIGVVVIM).

It belongs to the complex I subunit 6 family. Core subunit of respiratory chain NADH dehydrogenase (Complex I) which is composed of 45 different subunits.

It is found in the mitochondrion inner membrane. The catalysed reaction is a ubiquinone + NADH + 5 H(+)(in) = a ubiquinol + NAD(+) + 4 H(+)(out). Core subunit of the mitochondrial membrane respiratory chain NADH dehydrogenase (Complex I) which catalyzes electron transfer from NADH through the respiratory chain, using ubiquinone as an electron acceptor. Essential for the catalytic activity and assembly of complex I. In Bos indicus (Zebu), this protein is NADH-ubiquinone oxidoreductase chain 6 (MT-ND6).